Here is a 220-residue protein sequence, read N- to C-terminus: Tumor protein p53-inducible nuclear protein 2 (220 aa).

A compositionally biased stretch (low complexity) spans 1 to 12 (MFQRLSSLFFST). Disordered stretches follow at residues 1–24 (MFQR…CPRA), 41–69 (PDSY…LMDE), and 119–220 (PGSP…QFNY). Phosphoserine is present on Ser14. The short motif at 26-41 (VSEEDEVDGWLIIDLP) is the LIR element. The segment covering 47–64 (PPSPGAAPAPAGRPPPAP) has biased composition (pro residues). A Phosphoserine modification is found at Ser136. Residues 152–170 (HAAPLPARAALLEKAGQVR) show a composition bias toward low complexity. A compositionally biased stretch (polar residues) spans 205–220 (NQSSFIYQPCQRQFNY).

As to quaternary structure, interacts with VMP1, GABARAP, GABARAPL1, GABARAPL2, MAP1LC3A, MAP1LC3B, MAP1LC3C and THRA.

The protein localises to the cytoplasm. Its subcellular location is the cytosol. The protein resides in the nucleus. It localises to the PML body. It is found in the cytoplasmic vesicle. The protein localises to the autophagosome. Dual regulator of transcription and autophagy. Positively regulates autophagy and is required for autophagosome formation and processing. May act as a scaffold protein that recruits MAP1LC3A, GABARAP and GABARAPL2 and brings them to the autophagosome membrane by interacting with VMP1 where, in cooperation with the BECN1-PI3-kinase class III complex, they trigger autophagosome development. Acts as a transcriptional activator of THRA. This chain is Tumor protein p53-inducible nuclear protein 2 (TP53INP2), found in Homo sapiens (Human).